The primary structure comprises 330 residues: MNMDIASFFSGAGGLDLGFTKAGFNIVFANDNWKGCWKTFEKNHGIKINKKPIEWLKPSEIPDVVGFIGGPPCQSWSLAGSMCGADDPRGKTFYAYVDLVKEKDPLFFLAENVPGIVSRTHLPEFKRLVNSFIDIGYNVEYKVLNAKDYGVPQDRKRVFIVGYREDLNLKFEFPKPLNKKVTLRDAIGDLPEPKPALEKNRSNGENLEVPNHEYMTGTFSSRYMSRNRVRSWDEVSFTIQAGGRHAPCHPQANKMIKVGPDKFIFDPESPKPYRRLSVRECARIQGFPDDFIFYYKNVADGYTMVGNAVPVKLAEELAKKIKKDLEGVLN.

The SAM-dependent MTase C5-type domain occupies 3–328 (MDIASFFSGA…KKIKKDLEGV (326 aa)). The active site involves Cys-73.

This sequence belongs to the class I-like SAM-binding methyltransferase superfamily. C5-methyltransferase family.

It carries out the reaction a 2'-deoxycytidine in DNA + S-adenosyl-L-methionine = a 5-methyl-2'-deoxycytidine in DNA + S-adenosyl-L-homocysteine + H(+). Functionally, a methylase that recognizes the double-stranded sequence 5'-GGCC-3', methylates C-3 on both strands, and protects the DNA from cleavage by the MthTI endonuclease. The chain is Type II methyltransferase M.MthTI (mthTIM) from Methanothermobacter thermautotrophicus (Methanobacterium thermoformicicum).